The primary structure comprises 438 residues: ATP-dependent RNA helicase RhlB (438 aa).

The Q motif motif lies at 9-37; that stretch reads QRFADLPLHPEVKQALAENGFEFCTPIQA. In terms of domain architecture, Helicase ATP-binding spans 40–219; it reads LPVLLQSKDI…YDHMNEPVKV (180 aa). Position 53-60 (53-60) interacts with ATP; it reads AQTGTGKT. The DEAD box signature appears at 165-168; that stretch reads DEAD. The 148-residue stretch at 243-390 folds into the Helicase C-terminal domain; the sequence is KMRLLLTLIE…VSNYDSEALL (148 aa). The segment at 395–438 is disordered; it reads TPAKIHRKHPSGTRNLRDRSGASRPGAQRSGARPPRHDRTRRHS. The segment covering 428-438 has biased composition (basic residues); the sequence is PPRHDRTRRHS.

The protein belongs to the DEAD box helicase family. RhlB subfamily. In terms of assembly, component of the RNA degradosome, which is a multiprotein complex involved in RNA processing and mRNA degradation.

It is found in the cytoplasm. It carries out the reaction ATP + H2O = ADP + phosphate + H(+). Its function is as follows. DEAD-box RNA helicase involved in RNA degradation. Has RNA-dependent ATPase activity and unwinds double-stranded RNA. The protein is ATP-dependent RNA helicase RhlB of Shewanella baltica (strain OS185).